The following is a 121-amino-acid chain: Probable tail terminator protein (121 aa).

The protein belongs to the Skunalikevirus tail terminator protein family. As to quaternary structure, homohexamer. Interacts with the tail tube protein.

It is found in the virion. In terms of biological role, plays an essential role in tail assembly by capping the rapidly polymerizing tail once it has reached its requisite length and serving as the interaction surface for the connector and the tail tube proteins. The sequence is that of Probable tail terminator protein from Lactococcus lactis (Lactococcus lactis bacteriophage p2).